A 477-amino-acid polypeptide reads, in one-letter code: MFKNAFANLQKVGKSLMLPVSVLPIAGILLGVGSANFSWLPAVVSHVMAEAGGSVFANMPLIFAIGVALGFTNNDGVSALAAVVAYGIMVKTMAVVAPLVLHLPAEEIASKHLADTGVLGGIISGAIAAYMFNRFYRIKLPEYLGFFAGKRFVPIISGLAAIFTGVVLSFIWPPIGSAIQTFSQWAAYQNPVVAFGIYGFIERCLVPFGLHHIWNVPFQMQIGEYTNAAGQVFHGDIPRYMAGDPTAGKLSGGFLFKMYGLPAAAIAIWHSAKPENRAKVGGIMISAALTSFLTGITEPIEFSFMFVAPILYIIHAILAGLAFPICILLGMRDGTSFSHGLIDFIVLSGNSSKLWLFPIVGIGYAIVYYTIFRVLIKALDLKTPGREDATEDAKATGTSEMAPALVAAFGGKENITNLDACITRLRVSVADVSKVDQAGLKKLGAAGVVVAGSGVQAIFGTKSDNLKTEMDEYIRNH.

The Cytoplasmic segment spans residues 1-14 (MFKNAFANLQKVGK). Residues 1–388 (MFKNAFANLQ…LDLKTPGRED (388 aa)) enclose the PTS EIIC type-1 domain. A helical transmembrane segment spans residues 15 to 35 (SLMLPVSVLPIAGILLGVGSA). Over 36-50 (NFSWLPAVVSHVMAE) the chain is Periplasmic. A helical membrane pass occupies residues 51-71 (AGGSVFANMPLIFAIGVALGF). Residues 72-79 (TNNDGVSA) are Cytoplasmic-facing. The helical transmembrane segment at 80–100 (LAAVVAYGIMVKTMAVVAPLV) threads the bilayer. The Periplasmic segment spans residues 101-111 (LHLPAEEIASK). Residues 112–132 (HLADTGVLGGIISGAIAAYMF) traverse the membrane as a helical segment. Residues 133-151 (NRFYRIKLPEYLGFFAGKR) are Cytoplasmic-facing. Residues 152–172 (FVPIISGLAAIFTGVVLSFIW) traverse the membrane as a helical segment. Topologically, residues 173–190 (PPIGSAIQTFSQWAAYQN) are periplasmic. A helical transmembrane segment spans residues 191 to 211 (PVVAFGIYGFIERCLVPFGLH). The Cytoplasmic segment spans residues 212 to 249 (HIWNVPFQMQIGEYTNAAGQVFHGDIPRYMAGDPTAGK). The chain crosses the membrane as a helical span at residues 250–270 (LSGGFLFKMYGLPAAAIAIWH). The Periplasmic segment spans residues 271–279 (SAKPENRAK). A helical transmembrane segment spans residues 280-300 (VGGIMISAALTSFLTGITEPI). Residues 301 to 309 (EFSFMFVAP) lie on the Cytoplasmic side of the membrane. A helical membrane pass occupies residues 310-330 (ILYIIHAILAGLAFPICILLG). Residues 331-355 (MRDGTSFSHGLIDFIVLSGNSSKLW) are Periplasmic-facing. The chain crosses the membrane as a helical span at residues 356–376 (LFPIVGIGYAIVYYTIFRVLI). At 377 to 477 (KALDLKTPGR…TEMDEYIRNH (101 aa)) the chain is on the cytoplasmic side. A PTS EIIB type-1 domain is found at 399-477 (SEMAPALVAA…TEMDEYIRNH (79 aa)). C421 acts as the Phosphocysteinsyse intermediate; for EIIB activity in catalysis. C421 is modified (phosphocysteine).

It localises to the cell inner membrane. The catalysed reaction is N(pros)-phospho-L-histidyl-[protein] + D-glucose(out) = D-glucose 6-phosphate(in) + L-histidyl-[protein]. In terms of biological role, the phosphoenolpyruvate-dependent sugar phosphotransferase system (sugar PTS), a major carbohydrate active transport system, catalyzes the phosphorylation of incoming sugar substrates concomitantly with their translocation across the cell membrane. The enzyme II complex composed of PtsG and Crr is involved in glucose transport. Also functions as a chemoreceptor monitoring the environment for changes in sugar concentration. This chain is PTS system glucose-specific EIICB component (ptsG), found in Escherichia coli O6:H1 (strain CFT073 / ATCC 700928 / UPEC).